A 242-amino-acid polypeptide reads, in one-letter code: UPF0309 protein Oant_1457 (242 aa).

The SIS domain occupies 30-214 (AAELITAAAL…AKLVGKGDAP (185 aa)).

This sequence belongs to the UPF0309 family.

The chain is UPF0309 protein Oant_1457 from Brucella anthropi (strain ATCC 49188 / DSM 6882 / CCUG 24695 / JCM 21032 / LMG 3331 / NBRC 15819 / NCTC 12168 / Alc 37) (Ochrobactrum anthropi).